Consider the following 1296-residue polypeptide: Aggregation substance (1296 aa).

The signal sequence occupies residues 1-43 (MKQQTEVKKRFKMYKAKKHWVVAPILFIGVLGVVGLATDDVQA). Disordered regions lie at residues 48–188 (TQPG…KPAE) and 1221–1245 (HTPEKPQTPPEKTVIVPPTPKTPQA). Over residues 89-99 (KVEEVASEKNG) the composition is skewed to basic and acidic residues. Composition is skewed to polar residues over residues 100 to 117 (AEQSSATPNDTTNAQQPT) and 125 to 138 (QEQPVVSPETTNEP). Basic and acidic residues predominate over residues 160 to 178 (KEFETPDVDKAVDEAKKDP). The LPXTG sorting signal signature appears at 1261–1265 (LPQTG). T1264 carries the pentaglycyl murein peptidoglycan amidated threonine modification. Positions 1265–1296 (GEKQNVLLTVAGSLAAMLGLAGLGFKRRKETK) are cleaved as a propeptide — removed by sortase.

It belongs to the antigen I/II family.

It is found in the secreted. Its subcellular location is the cell wall. Functionally, aggregation substance allows donor and recipient strains to form tight aggregates which allow the non-motile bacteria to maintain physical contact over a period of time sufficient to permit conjugative transfer of the sex pheromone plasmid from donor to recipient strains. This is Aggregation substance (asa1) from Enterococcus faecalis (strain ATCC 700802 / V583).